A 279-amino-acid chain; its full sequence is Digeranylgeranylglyceryl phosphate synthase (279 aa).

8 consecutive transmembrane segments (helical) span residues 14–34, 36–56, 94–114, 131–153, 157–175, 201–221, 224–244, and 259–279; these read VKNCLTASFGTIIGGLIASNF, FGLIGYILLASLIVFLVCGFG, LMISGIIISLFNMICFAIALI, IIGNLIVAYLTGSIFIFGGASVG, ITLILFLCALFATWSREII, IFVAIGFLLCSILLSPLPYIL, FGAPYLMAIMICNVLFILAVL, and SKYIKIIMNLVLLSFVIGSLM.

This sequence belongs to the UbiA prenyltransferase family. DGGGP synthase subfamily. The cofactor is Mg(2+).

Its subcellular location is the cell membrane. It carries out the reaction sn-3-O-(geranylgeranyl)glycerol 1-phosphate + (2E,6E,10E)-geranylgeranyl diphosphate = 2,3-bis-O-(geranylgeranyl)-sn-glycerol 1-phosphate + diphosphate. Its pathway is membrane lipid metabolism; glycerophospholipid metabolism. Prenyltransferase that catalyzes the transfer of the geranylgeranyl moiety of geranylgeranyl diphosphate (GGPP) to the C2 hydroxyl of (S)-3-O-geranylgeranylglyceryl phosphate (GGGP). This reaction is the second ether-bond-formation step in the biosynthesis of archaeal membrane lipids. This Methanococcus aeolicus (strain ATCC BAA-1280 / DSM 17508 / OCM 812 / Nankai-3) protein is Digeranylgeranylglyceryl phosphate synthase.